A 397-amino-acid chain; its full sequence is S-adenosylmethionine synthase (397 aa).

Histidine 15 lines the ATP pocket. A Mg(2+)-binding site is contributed by aspartate 17. Position 43 (glutamate 43) interacts with K(+). L-methionine is bound by residues glutamate 56 and glutamine 99. The interval glutamine 99–glutamate 109 is flexible loop. ATP-binding positions include aspartate 175 to lysine 177, arginine 241 to phenylalanine 242, aspartate 250, arginine 256 to lysine 257, alanine 273, and lysine 277. Residue aspartate 250 participates in L-methionine binding. Lysine 281 contributes to the L-methionine binding site.

It belongs to the AdoMet synthase family. In terms of assembly, homotetramer; dimer of dimers. It depends on Mg(2+) as a cofactor. The cofactor is K(+).

It is found in the cytoplasm. The enzyme catalyses L-methionine + ATP + H2O = S-adenosyl-L-methionine + phosphate + diphosphate. Its pathway is amino-acid biosynthesis; S-adenosyl-L-methionine biosynthesis; S-adenosyl-L-methionine from L-methionine: step 1/1. In terms of biological role, catalyzes the formation of S-adenosylmethionine (AdoMet) from methionine and ATP. The overall synthetic reaction is composed of two sequential steps, AdoMet formation and the subsequent tripolyphosphate hydrolysis which occurs prior to release of AdoMet from the enzyme. The sequence is that of S-adenosylmethionine synthase from Clostridioides difficile (strain 630) (Peptoclostridium difficile).